Consider the following 303-residue polypeptide: UDP-N-acetylenolpyruvoylglucosamine reductase (303 aa).

Positions 27–207 constitute an FAD-binding PCMH-type domain; that stretch reads KVGGISQVFY…TSISQKLQKI (181 aa). Arg-175 is an active-site residue. Ser-224 acts as the Proton donor in catalysis. Glu-294 is a catalytic residue.

This sequence belongs to the MurB family. The cofactor is FAD.

The protein localises to the cytoplasm. It carries out the reaction UDP-N-acetyl-alpha-D-muramate + NADP(+) = UDP-N-acetyl-3-O-(1-carboxyvinyl)-alpha-D-glucosamine + NADPH + H(+). Its pathway is cell wall biogenesis; peptidoglycan biosynthesis. Cell wall formation. This chain is UDP-N-acetylenolpyruvoylglucosamine reductase, found in Orientia tsutsugamushi (strain Boryong) (Rickettsia tsutsugamushi).